The following is a 328-amino-acid chain: uncharacterized protein (328 aa).

It to the C-terminal of para-aminobenzoate synthase component I.

This is an uncharacterized protein from Haemophilus influenzae (strain ATCC 51907 / DSM 11121 / KW20 / Rd).